A 270-amino-acid chain; its full sequence is 3-methyl-2-oxobutanoate hydroxymethyltransferase (270 aa).

Mg(2+) contacts are provided by Asp-53 and Asp-92. Residues 53 to 54 (DS), Asp-92, and Lys-120 contribute to the 3-methyl-2-oxobutanoate site. Mg(2+) is bound at residue Glu-122. The active-site Proton acceptor is Glu-189.

The protein belongs to the PanB family. Homodecamer; pentamer of dimers. The cofactor is Mg(2+).

It is found in the cytoplasm. It carries out the reaction 3-methyl-2-oxobutanoate + (6R)-5,10-methylene-5,6,7,8-tetrahydrofolate + H2O = 2-dehydropantoate + (6S)-5,6,7,8-tetrahydrofolate. It participates in cofactor biosynthesis; (R)-pantothenate biosynthesis; (R)-pantoate from 3-methyl-2-oxobutanoate: step 1/2. In terms of biological role, catalyzes the reversible reaction in which hydroxymethyl group from 5,10-methylenetetrahydrofolate is transferred onto alpha-ketoisovalerate to form ketopantoate. In Saccharophagus degradans (strain 2-40 / ATCC 43961 / DSM 17024), this protein is 3-methyl-2-oxobutanoate hydroxymethyltransferase.